A 237-amino-acid chain; its full sequence is Ribonuclease PH (237 aa).

Residues Arg86 and 124-126 contribute to the phosphate site; that span reads GTR.

The protein belongs to the RNase PH family. Homohexameric ring arranged as a trimer of dimers.

The enzyme catalyses tRNA(n+1) + phosphate = tRNA(n) + a ribonucleoside 5'-diphosphate. In terms of biological role, phosphorolytic 3'-5' exoribonuclease that plays an important role in tRNA 3'-end maturation. Removes nucleotide residues following the 3'-CCA terminus of tRNAs; can also add nucleotides to the ends of RNA molecules by using nucleoside diphosphates as substrates, but this may not be physiologically important. Probably plays a role in initiation of 16S rRNA degradation (leading to ribosome degradation) during starvation. The chain is Ribonuclease PH from Shewanella oneidensis (strain ATCC 700550 / JCM 31522 / CIP 106686 / LMG 19005 / NCIMB 14063 / MR-1).